The sequence spans 242 residues: Uridylate kinase (242 aa).

K17–G20 serves as a coordination point for ATP. UMP is bound at residue G59. The ATP site is built by G60 and R64. UMP is bound by residues D79 and T140–T147. Residues T167, Y173, and D176 each contribute to the ATP site.

The protein belongs to the UMP kinase family. Homohexamer.

Its subcellular location is the cytoplasm. It carries out the reaction UMP + ATP = UDP + ADP. The protein operates within pyrimidine metabolism; CTP biosynthesis via de novo pathway; UDP from UMP (UMPK route): step 1/1. Its activity is regulated as follows. Inhibited by UTP. Its function is as follows. Catalyzes the reversible phosphorylation of UMP to UDP. This Marinobacter nauticus (strain ATCC 700491 / DSM 11845 / VT8) (Marinobacter aquaeolei) protein is Uridylate kinase.